The following is a 566-amino-acid chain: Proline--tRNA ligase (566 aa).

Belongs to the class-II aminoacyl-tRNA synthetase family. ProS type 1 subfamily. In terms of assembly, homodimer.

The protein resides in the cytoplasm. It carries out the reaction tRNA(Pro) + L-proline + ATP = L-prolyl-tRNA(Pro) + AMP + diphosphate. Functionally, catalyzes the attachment of proline to tRNA(Pro) in a two-step reaction: proline is first activated by ATP to form Pro-AMP and then transferred to the acceptor end of tRNA(Pro). As ProRS can inadvertently accommodate and process non-cognate amino acids such as alanine and cysteine, to avoid such errors it has two additional distinct editing activities against alanine. One activity is designated as 'pretransfer' editing and involves the tRNA(Pro)-independent hydrolysis of activated Ala-AMP. The other activity is designated 'posttransfer' editing and involves deacylation of mischarged Ala-tRNA(Pro). The misacylated Cys-tRNA(Pro) is not edited by ProRS. The sequence is that of Proline--tRNA ligase from Bacillus cereus (strain G9842).